Consider the following 850-residue polypeptide: Bifunctional uridylyltransferase/uridylyl-removing enzyme (850 aa).

The tract at residues 1–317 is uridylyltransferase; sequence MSARPFADLR…LFPVVAPPLP (317 aa). Residues 318-673 are uridylyl-removing; the sequence is IDDDFQLRAG…ARLSPAGEGI (356 aa). Positions 436–558 constitute an HD domain; sequence VDEHILTVLR…VGDTRRLDAL (123 aa). 2 ACT domains span residues 674–755 and 783–850; these read QVMV…AVQP and VLSI…GVLG.

It belongs to the GlnD family. Mg(2+) is required as a cofactor.

It carries out the reaction [protein-PII]-L-tyrosine + UTP = [protein-PII]-uridylyl-L-tyrosine + diphosphate. It catalyses the reaction [protein-PII]-uridylyl-L-tyrosine + H2O = [protein-PII]-L-tyrosine + UMP + H(+). Its activity is regulated as follows. Uridylyltransferase (UTase) activity is inhibited by glutamine, while glutamine activates uridylyl-removing (UR) activity. Functionally, modifies, by uridylylation and deuridylylation, the PII regulatory proteins (GlnB and homologs), in response to the nitrogen status of the cell that GlnD senses through the glutamine level. Under low glutamine levels, catalyzes the conversion of the PII proteins and UTP to PII-UMP and PPi, while under higher glutamine levels, GlnD hydrolyzes PII-UMP to PII and UMP (deuridylylation). Thus, controls uridylylation state and activity of the PII proteins, and plays an important role in the regulation of nitrogen assimilation and metabolism. The chain is Bifunctional uridylyltransferase/uridylyl-removing enzyme from Thiobacillus denitrificans (strain ATCC 25259 / T1).